Here is a 743-residue protein sequence, read N- to C-terminus: Dolichyl-phosphooligosaccharide-protein glycotransferase 2 (743 aa).

At 1 to 7 (MKIDKRL) the chain is on the cytoplasmic side. Residues 8 to 28 (MVIVAIATLFRMIPFRLKYLV) traverse the membrane as a helical segment. Positions 29–31 (GSD) match the DXD motif 1 motif. At 29 to 91 (GSDPYFHLAY…FSFLGISLYT (63 aa)) the chain is on the extracellular side. Aspartate 31 serves as a coordination point for Mn(2+). A helical membrane pass occupies residues 92 to 112 (AFRVTPVIFGVLTVVFFYLSL). Topologically, residues 113–119 (KKLYNRD) are cytoplasmic. The chain crosses the membrane as a helical span at residues 120-140 (VAFIVGLFLGVNYGHIFRSMA). At 141-144 (NYYR) the chain is on the extracellular side. Positions 144 and 146 each coordinate Mn(2+). The DXD motif 2 signature appears at 144 to 146 (RGD). Residues 145-165 (GDNYMLFWYSVALLGIALGLK) traverse the membrane as a helical segment. Residues 166 to 170 (TRSKY) lie on the Cytoplasmic side of the membrane. 2 helical membrane-spanning segments follow: residues 171–191 (RYLF…FWQA) and 192–212 (YYPI…YAYL). At 213 to 216 (KSPK) the chain is on the cytoplasmic side. The chain crosses the membrane as a helical span at residues 217–237 (LFLDSILIVLSTGLGVLIANI). At 238–272 (LGDKVGYGMLGYTDWMGKKVAETFGLEFGFIKDAY) the chain is on the extracellular side. The chain crosses the membrane as a helical span at residues 273-293 (LLIHVKYLLPLSLVFLGFLII). Over 294 to 302 (TKKLNPKIK) the chain is Cytoplasmic. Residues 303 to 323 (VGVLVGGSILAFIVMLVKFPA) traverse the membrane as a helical segment. At 324–345 (LKDLSTGFGTFREVPISETLPP) the chain is on the extracellular side. Residues 333-336 (TFRE) carry the TIXE motif motif. A helical membrane pass occupies residues 346–366 (TLDDLWRAYNIAIFLAALYIL). Over 367–373 (RLRKIRS) the chain is Cytoplasmic. The chain crosses the membrane as a helical span at residues 374 to 391 (GDAILLGYVITSLWMLRY). At 392–394 (WTR) the chain is on the extracellular side. A glycophospholipid is bound at residue arginine 394. The chain crosses the membrane as a helical span at residues 395–415 (FLFTAAPAVAFLSGIGVYELT). Residues 416–424 (RRIKENKIR) are Cytoplasmic-facing. A helical membrane pass occupies residues 425-445 (ITSLGVVILLSSAFSLGEVYS). At 446–743 (VKPFMNENWE…LDRGIVRVKN (298 aa)) the chain is on the extracellular side. Residues 474 to 476 (WWD) are interacts with target acceptor peptide in protein substrate. The WWDYG motif motif lies at 474-478 (WWDWG). Residues 526-533 (DILKFEAI) carry the DK motif motif.

It belongs to the STT3 family. Mn(2+) is required as a cofactor. Mg(2+) serves as cofactor.

It is found in the cell membrane. It carries out the reaction an archaeal dolichyl phosphooligosaccharide + [protein]-L-asparagine = an archaeal dolichyl phosphate + a glycoprotein with the oligosaccharide chain attached by N-beta-D-glycosyl linkage to a protein L-asparagine.. It participates in protein modification; protein glycosylation. In terms of biological role, oligosaccharyl transferase (OST) that catalyzes the initial transfer of a defined glycan (ManNAcXyl(2)GlcAMan(2)GalNAc in P.furiosus) from the lipid carrier dolichol-monophosphate to an asparagine residue within an Asn-X-Ser/Thr consensus motif in nascent polypeptide chains, the first step in protein N-glycosylation. This Pyrococcus furiosus (strain ATCC 43587 / DSM 3638 / JCM 8422 / Vc1) protein is Dolichyl-phosphooligosaccharide-protein glycotransferase 2 (aglB2).